We begin with the raw amino-acid sequence, 204 residues long: Large ribosomal subunit protein bL25 (204 aa).

The protein belongs to the bacterial ribosomal protein bL25 family. CTC subfamily. In terms of assembly, part of the 50S ribosomal subunit; part of the 5S rRNA/L5/L18/L25 subcomplex. Contacts the 5S rRNA. Binds to the 5S rRNA independently of L5 and L18.

This is one of the proteins that binds to the 5S RNA in the ribosome where it forms part of the central protuberance. The polypeptide is Large ribosomal subunit protein bL25 (Burkholderia mallei (strain NCTC 10247)).